Reading from the N-terminus, the 82-residue chain is Delta-conotoxin SVIE (82 aa).

Positions 1–22 (MKLTCVMIVAVLFLTTWTFVTA) are cleaved as a signal peptide. Positions 23–51 (DDSRYGLKNLFPKARHEMKNPEASKLNKR) are excised as a propeptide. Disulfide bonds link Cys-54–Cys-69, Cys-61–Cys-73, and Cys-68–Cys-77. Pro-65 carries the 4-hydroxyproline modification.

This sequence belongs to the conotoxin O1 superfamily. Expressed by the venom duct.

It localises to the secreted. Delta-conotoxins bind to site 6 of voltage-gated sodium channels (Nav) and inhibit the inactivation process. Impairs rapid channel inactivation of Nav1.4/SCN4A (Kd=500 nM). Interacts with a conserved hydrophobic triad (YFV) in the domain-4 voltage sensor of sodium channels. In vivo, injection of both native or synthetic peptide induces twitching of back limbs, running in circles, and spastic paralysis. The protein is Delta-conotoxin SVIE (SO6) of Conus striatus (Striated cone).